The primary structure comprises 272 residues: Large ribosomal subunit protein uL2 (272 aa).

The tract at residues 247 to 272 is disordered; the sequence is PWGQPCKGFKTRNNKRTNSSIIKRRK. Polar residues predominate over residues 262–272; that stretch reads RTNSSIIKRRK.

This sequence belongs to the universal ribosomal protein uL2 family. As to quaternary structure, part of the 50S ribosomal subunit. Forms a bridge to the 30S subunit in the 70S ribosome.

In terms of biological role, one of the primary rRNA binding proteins. Required for association of the 30S and 50S subunits to form the 70S ribosome, for tRNA binding and peptide bond formation. It has been suggested to have peptidyltransferase activity; this is somewhat controversial. Makes several contacts with the 16S rRNA in the 70S ribosome. The chain is Large ribosomal subunit protein uL2 from Bdellovibrio bacteriovorus (strain ATCC 15356 / DSM 50701 / NCIMB 9529 / HD100).